The following is a 350-amino-acid chain: Atypical chemokine receptor 4 (350 aa).

Topologically, residues 1–42 are extracellular; that stretch reads MALEQNQSTDYYYEENEMNGTYDYSQYELICIKEDVREFAKV. N-linked (GlcNAc...) asparagine glycans are attached at residues N6 and N19. The chain crosses the membrane as a helical span at residues 43–63; that stretch reads FLPVFLTIVFVIGLAGNSMVV. Residues 64–87 lie on the Cytoplasmic side of the membrane; that stretch reads AIYAYYKKQRTKTDVYILNLAVAD. The helical transmembrane segment at 88-108 threads the bilayer; it reads LLLLFTLPFWAVNAVHGWVLG. The Extracellular portion of the chain corresponds to 109–113; it reads KIMCK. C112 and C184 are disulfide-bonded. Residues 114–134 traverse the membrane as a helical segment; the sequence is ITSALYTLNFVSGMQFLACIS. Residues 135–154 lie on the Cytoplasmic side of the membrane; that stretch reads IDRYVAVTKVPSQSGVGKPC. A helical transmembrane segment spans residues 155 to 175; that stretch reads WIICFCVWMAAILLSIPQLVF. Residues 176–201 lie on the Extracellular side of the membrane; that stretch reads YTVNDNARCIPIFPRYLGTSMKALIQ. A helical transmembrane segment spans residues 202 to 222; it reads MLEICIGFVVPFLIMGVCYFI. The Cytoplasmic portion of the chain corresponds to 223-240; that stretch reads TARTLMKMPNIKISRPLK. A helical transmembrane segment spans residues 241 to 261; that stretch reads VLLTVVIVFIVTQLPYNIVKF. At 262 to 289 the chain is on the extracellular side; the sequence is CRAIDIIYSLITSCNMSKRMDIAIQVTE. The helical transmembrane segment at 290–310 threads the bilayer; it reads SIALFHSCLNPILYVFMGASF. The Cytoplasmic portion of the chain corresponds to 311 to 350; that stretch reads KNYVMKVAKKYGSWRRQRQSVEEFPFDSEGPTEPTSTFSI.

Belongs to the G-protein coupled receptor 1 family. Atypical chemokine receptor subfamily. Forms heteromers with CXCR3. Interacts with ARRB1 and ARRB2. The Ser/Thr residues in the C-terminal cytoplasmic tail may be phosphorylated. As to expression, predominantly expressed in heart. Lower expression in lung, pancreas, spleen, colon, skeletal muscle and small intestine.

The protein resides in the early endosome. It is found in the recycling endosome. Its subcellular location is the cell membrane. Functionally, atypical chemokine receptor that controls chemokine levels and localization via high-affinity chemokine binding that is uncoupled from classic ligand-driven signal transduction cascades, resulting instead in chemokine sequestration, degradation, or transcytosis. Also known as interceptor (internalizing receptor) or chemokine-scavenging receptor or chemokine decoy receptor. Acts as a receptor for chemokines CCL2, CCL8, CCL13, CCL19, CCL21 and CCL25. Chemokine-binding does not activate G-protein-mediated signal transduction but instead induces beta-arrestin recruitment, leading to ligand internalization. Plays an important role in controlling the migration of immune and cancer cells that express chemokine receptors CCR7 and CCR9, by reducing the availability of CCL19, CCL21, and CCL25 through internalization. Negatively regulates CXCR3-induced chemotaxis. Regulates T-cell development in the thymus. This Homo sapiens (Human) protein is Atypical chemokine receptor 4 (ACKR4).